The primary structure comprises 632 residues: Probable potassium transport system protein Kup (632 aa).

12 consecutive transmembrane segments (helical) span residues leucine 19–leucine 39, isoleucine 59–valine 79, leucine 110–proline 130, proline 146–isoleucine 166, phenylalanine 178–valine 198, leucine 221–tyrosine 241, tryptophan 256–leucine 276, methionine 298–phenylalanine 318, isoleucine 346–phenylalanine 366, alanine 375–methionine 395, proline 403–alanine 423, and isoleucine 428–threonine 448.

The protein belongs to the HAK/KUP transporter (TC 2.A.72) family.

Its subcellular location is the cell inner membrane. The catalysed reaction is K(+)(in) + H(+)(in) = K(+)(out) + H(+)(out). Functionally, transport of potassium into the cell. Likely operates as a K(+):H(+) symporter. The polypeptide is Probable potassium transport system protein Kup (Cupriavidus metallidurans (strain ATCC 43123 / DSM 2839 / NBRC 102507 / CH34) (Ralstonia metallidurans)).